The chain runs to 898 residues: Phosphoenolpyruvate carboxylase (898 aa).

Residues His138 and Lys561 contribute to the active site.

This sequence belongs to the PEPCase type 1 family. It depends on Mg(2+) as a cofactor.

It catalyses the reaction oxaloacetate + phosphate = phosphoenolpyruvate + hydrogencarbonate. Forms oxaloacetate, a four-carbon dicarboxylic acid source for the tricarboxylic acid cycle. In Streptococcus suis (strain 98HAH33), this protein is Phosphoenolpyruvate carboxylase.